The primary structure comprises 687 residues: Elongation factor G (687 aa).

A tr-type G domain is found at 8-282; sequence NKFRNIGIMA…AVLAYLPSPL (275 aa). Residues 17 to 24, 81 to 85, and 135 to 138 each bind GTP; these read AHIDAGKT, DTPGH, and NKMD.

Belongs to the TRAFAC class translation factor GTPase superfamily. Classic translation factor GTPase family. EF-G/EF-2 subfamily.

It localises to the cytoplasm. Catalyzes the GTP-dependent ribosomal translocation step during translation elongation. During this step, the ribosome changes from the pre-translocational (PRE) to the post-translocational (POST) state as the newly formed A-site-bound peptidyl-tRNA and P-site-bound deacylated tRNA move to the P and E sites, respectively. Catalyzes the coordinated movement of the two tRNA molecules, the mRNA and conformational changes in the ribosome. The sequence is that of Elongation factor G from Clostridium novyi (strain NT).